Here is a 504-residue protein sequence, read N- to C-terminus: MASIKATEISSLIKQQIDQFETTVNVQDVGTVIRVGDGIAFAHGLDNVMAGELLEFSTGVMGMAQNLEEDSVGIIILGPYTDIREGDEVKRTGRIMEVPVGSELLGRVVNPLGQPLDGLGPVHTSKTRPIESPAPGVMARKSVHEPLQTGIKSIDSMIPIGRGQRELIIGDRQTGKTAIAIDTIINQKDQDMICVYVAIGQKESTVSGVVETLRQRGALEYTIVVSASASDPAPLLFLAPYTGVSMAEEFMYNGKHVLVIYDDLSKQAAAYREMSLLLRRPPGREAFPGDVFYLHSRLLERAAKLNDDLGGGSITALPFIETQAGDVSAYIPTNVISITDGQVFLQSDLFHSGVRPAVNPGISVSRVGGSAQIKAMKKVAGTLRLDLAAYRELEAFAQFGSDLDAATQARLNRGERTVELLKQDLHQPLPVEKQVAIIYALTKGYLDDVPVADCRRFESELFTYLESNNNELLEHIRTTGNLPEESDLKAAIEAFKKGFVASNE.

170–177 (GDRQTGKT) lines the ATP pocket.

Belongs to the ATPase alpha/beta chains family. As to quaternary structure, F-type ATPases have 2 components, CF(1) - the catalytic core - and CF(0) - the membrane proton channel. CF(1) has five subunits: alpha(3), beta(3), gamma(1), delta(1), epsilon(1). CF(0) has three main subunits: a(1), b(2) and c(9-12). The alpha and beta chains form an alternating ring which encloses part of the gamma chain. CF(1) is attached to CF(0) by a central stalk formed by the gamma and epsilon chains, while a peripheral stalk is formed by the delta and b chains.

The protein localises to the cell membrane. The catalysed reaction is ATP + H2O + 4 H(+)(in) = ADP + phosphate + 5 H(+)(out). Functionally, produces ATP from ADP in the presence of a proton gradient across the membrane. The alpha chain is a regulatory subunit. The polypeptide is ATP synthase subunit alpha (Shouchella clausii (strain KSM-K16) (Alkalihalobacillus clausii)).